Reading from the N-terminus, the 371-residue chain is tRNA 2-selenouridine synthase (371 aa).

One can recognise a Rhodanese domain in the interval 14–137; it reads FLDDVPLIDL…MRRFLIDTLD (124 aa). The active-site S-selanylcysteine intermediate is the Cys97.

Belongs to the SelU family. In terms of assembly, monomer.

It catalyses the reaction 5-methylaminomethyl-2-thiouridine(34) in tRNA + selenophosphate + (2E)-geranyl diphosphate + H2O + H(+) = 5-methylaminomethyl-2-selenouridine(34) in tRNA + (2E)-thiogeraniol + phosphate + diphosphate. It carries out the reaction 5-methylaminomethyl-2-thiouridine(34) in tRNA + (2E)-geranyl diphosphate = 5-methylaminomethyl-S-(2E)-geranyl-thiouridine(34) in tRNA + diphosphate. The catalysed reaction is 5-methylaminomethyl-S-(2E)-geranyl-thiouridine(34) in tRNA + selenophosphate + H(+) = 5-methylaminomethyl-2-(Se-phospho)selenouridine(34) in tRNA + (2E)-thiogeraniol. The enzyme catalyses 5-methylaminomethyl-2-(Se-phospho)selenouridine(34) in tRNA + H2O = 5-methylaminomethyl-2-selenouridine(34) in tRNA + phosphate. In terms of biological role, involved in the post-transcriptional modification of the uridine at the wobble position (U34) of tRNA(Lys), tRNA(Glu) and tRNA(Gln). Catalyzes the conversion of 2-thiouridine (S2U-RNA) to 2-selenouridine (Se2U-RNA). Acts in a two-step process involving geranylation of 2-thiouridine (S2U) to S-geranyl-2-thiouridine (geS2U) and subsequent selenation of the latter derivative to 2-selenouridine (Se2U) in the tRNA chain. This chain is tRNA 2-selenouridine synthase, found in Aeromonas salmonicida (strain A449).